The primary structure comprises 1095 residues: DNA polymerase delta catalytic subunit (1095 aa).

The segment covering 1–11 has biased composition (basic residues); sequence MNRSGISKKRP. The disordered stretch occupies residues 1–37; that stretch reads MNRSGISKKRPPPSNTPPPAGKHRATGDSTPSPAIGT. Residues cysteine 1007, cysteine 1010, cysteine 1020, and cysteine 1023 each coordinate Zn(2+). The CysA-type zinc-finger motif lies at 1007–1023; the sequence is CVGCKVPISNGTLCASC. [4Fe-4S] cluster is bound by residues cysteine 1052, cysteine 1055, cysteine 1065, and cysteine 1070. The CysB motif signature appears at 1052 to 1070; sequence CQECQGSLHQDVLCTSRDC.

Belongs to the DNA polymerase type-B family. Heterodimer with subunits of 125 kDa and 50 kDa. The 125 kDa subunit contains the polymerase active site and most likely the active site for the 3'-5' exonuclease activity. It depends on [4Fe-4S] cluster as a cofactor.

It is found in the nucleus. It catalyses the reaction DNA(n) + a 2'-deoxyribonucleoside 5'-triphosphate = DNA(n+1) + diphosphate. This polymerase possesses two enzymatic activities: DNA synthesis (polymerase) and an exonucleolytic activity that degrades single-stranded DNA in the 3'- to 5'-direction. The sequence is that of DNA polymerase delta catalytic subunit (POLD1) from Arabidopsis thaliana (Mouse-ear cress).